The chain runs to 1088 residues: uncharacterized protein (1088 aa).

Ser-299 is subject to Phosphoserine. The interval Pro-954–Lys-980 is disordered. Residues Ser-956–Glu-968 are compositionally biased toward low complexity. Residue Ser-984 is modified to Phosphoserine. Thr-1013 is subject to Phosphothreonine. Positions Met-1063–Ser-1088 are disordered. Ser-1081 carries the post-translational modification Phosphoserine.

This is an uncharacterized protein from Saccharomyces cerevisiae (strain ATCC 204508 / S288c) (Baker's yeast).